The sequence spans 252 residues: Eukaryotic translation initiation factor 3 subunit J (252 aa).

Disordered regions lie at residues 24–107 (VPAG…TPEE) and 209–232 (KQSK…TMKD). Residues 36-56 (EDEEDDVKDNWDDEEEEEEVK) show a composition bias toward acidic residues. The span at 57–107 (EAEVKQEPKVSEKKKIAEKIKEKEKQQKKKQEELKKRLEAPEEHKELTPEE) shows a compositional bias: basic and acidic residues. Residues 65-130 (KVSEKKKIAE…ESDLELAKET (66 aa)) are a coiled coil.

This sequence belongs to the eIF-3 subunit J family. As to quaternary structure, component of the eukaryotic translation initiation factor 3 (eIF-3) complex, which is composed of 13 subunits: EIF3A, EIF3B, EIF3C, EIF3D, EIF3E, EIF3F, EIF3G, EIF3H, EIF3I, EIF3J, EIF3K, EIF3L and EIF3M.

Its subcellular location is the cytoplasm. Component of the eukaryotic translation initiation factor 3 (eIF-3) complex, which is involved in protein synthesis of a specialized repertoire of mRNAs and, together with other initiation factors, stimulates binding of mRNA and methionyl-tRNAi to the 40S ribosome. The eIF-3 complex specifically targets and initiates translation of a subset of mRNAs involved in cell proliferation. This Gallus gallus (Chicken) protein is Eukaryotic translation initiation factor 3 subunit J.